The primary structure comprises 132 residues: MSTKYVEVGELKEGSYVVIDGEPCRVVEIEKSKTGKHGSAKARIVAIGVFDGGKRTLSLPVDAQIEVPIIEKFTAQVLSISGNVIQLMDMRDYKTIEVPIDYVEEEAKGRLAPGVEVEVWQILNRYKITRVK.

A Hypusine modification is found at Lys-36.

Belongs to the eIF-5A family.

The protein resides in the cytoplasm. Its function is as follows. Functions by promoting the formation of the first peptide bond. The protein is Translation initiation factor 5A (eIF5A) of Pyrobaculum islandicum (strain DSM 4184 / JCM 9189 / GEO3).